We begin with the raw amino-acid sequence, 201 residues long: Dephospho-CoA kinase (201 aa).

In terms of domain architecture, DPCK spans 4–201 (AFFVTASIAC…VIQEISKGKM (198 aa)). 12-17 (ACGKST) is an ATP binding site.

Belongs to the CoaE family.

The protein resides in the cytoplasm. It catalyses the reaction 3'-dephospho-CoA + ATP = ADP + CoA + H(+). It participates in cofactor biosynthesis; coenzyme A biosynthesis; CoA from (R)-pantothenate: step 5/5. In terms of biological role, catalyzes the phosphorylation of the 3'-hydroxyl group of dephosphocoenzyme A to form coenzyme A. The sequence is that of Dephospho-CoA kinase from Campylobacter jejuni (strain RM1221).